Reading from the N-terminus, the 611-residue chain is Putative pentatricopeptide repeat-containing protein At1g56570 (611 aa).

13 PPR repeats span residues 44–74, 75–109, 110–144, 145–176, 177–211, 212–246, 247–281, 282–311, 312–346, 347–377, 379–413, 414–444, and 450–480; these read HHIL…MPDR, DVVA…GTSP, NEFT…GMEG, SLYV…IKVK, NDVT…NAEV, TPYC…GFQS, NLPV…DLIT, WNTL…GFVP, NCYT…GFNK, NVEL…IVDR, NLVS…GIRP, DRIV…MESE, and DRDI…MPFK. The type E motif stretch occupies residues 485–561; it reads TWGAILGACK…EAGMSWILVE (77 aa). The type E(+) motif stretch occupies residues 562–592; that stretch reads NQVFSFAVSDKMCPNASSVYSVLGLLIEETR.

It belongs to the PPR family. PCMP-E subfamily.

In Arabidopsis thaliana (Mouse-ear cress), this protein is Putative pentatricopeptide repeat-containing protein At1g56570 (PCMP-E64).